Consider the following 186-residue polypeptide: Peptidyl-tRNA hydrolase (186 aa).

Y16 serves as a coordination point for tRNA. The Proton acceptor role is filled by H21. TRNA contacts are provided by Y66, N68, and N114.

Belongs to the PTH family. In terms of assembly, monomer.

The protein localises to the cytoplasm. It carries out the reaction an N-acyl-L-alpha-aminoacyl-tRNA + H2O = an N-acyl-L-amino acid + a tRNA + H(+). Its function is as follows. Hydrolyzes ribosome-free peptidyl-tRNAs (with 1 or more amino acids incorporated), which drop off the ribosome during protein synthesis, or as a result of ribosome stalling. Functionally, catalyzes the release of premature peptidyl moieties from peptidyl-tRNA molecules trapped in stalled 50S ribosomal subunits, and thus maintains levels of free tRNAs and 50S ribosomes. The sequence is that of Peptidyl-tRNA hydrolase from Ureaplasma urealyticum serovar 10 (strain ATCC 33699 / Western).